Reading from the N-terminus, the 147-residue chain is Large ribosomal subunit protein bL9 (147 aa).

Belongs to the bacterial ribosomal protein bL9 family.

Binds to the 23S rRNA. This Clostridium botulinum (strain ATCC 19397 / Type A) protein is Large ribosomal subunit protein bL9.